We begin with the raw amino-acid sequence, 364 residues long: Polygalacturonase (364 aa).

The first 21 residues, 1–21 (MVAYALTSMLLSAGALVAAAP), serve as a signal peptide directing secretion. Positions 22-27 (SGLDAR) are excised as a propeptide. A disulfide bond links C30 and C45. PbH1 repeat units follow at residues 158–188 (VTGL…DIGS), 189–210 (SSGI…AINS), 211–231 (GSDI…SIGS), 240–261 (VKGV…RIKT), 269–291 (VSDI…VIEQ), and 303–348 (TTGV…SITG). D203 acts as the Proton donor in catalysis. A disulfide bridge connects residues C205 and C221. H225 is an active-site residue. A glycan (N-linked (GlcNAc...) asparagine) is linked at N276. C331 and C336 are disulfide-bonded. Residue N340 is glycosylated (N-linked (GlcNAc...) asparagine). C355 and C364 are oxidised to a cystine.

This sequence belongs to the glycosyl hydrolase 28 family.

The protein resides in the secreted. It carries out the reaction (1,4-alpha-D-galacturonosyl)n+m + H2O = (1,4-alpha-D-galacturonosyl)n + (1,4-alpha-D-galacturonosyl)m.. Functionally, involved in maceration and soft-rotting of plant tissue. Hydrolyzes the 1,4-alpha glycosidic bonds of de-esterified pectate in the smooth region of the plant cell wall. The polypeptide is Polygalacturonase (PGN1) (Cochliobolus carbonum (Maize leaf spot fungus)).